Here is a 196-residue protein sequence, read N- to C-terminus: Imidazole glycerol phosphate synthase subunit HisH (196 aa).

Residues 2–196 (KVAVIKYNAG…ERIIKNFLEL (195 aa)) enclose the Glutamine amidotransferase type-1 domain. Catalysis depends on Cys77, which acts as the Nucleophile. Residues His178 and Glu180 contribute to the active site.

Heterodimer of HisH and HisF.

The protein resides in the cytoplasm. The catalysed reaction is 5-[(5-phospho-1-deoxy-D-ribulos-1-ylimino)methylamino]-1-(5-phospho-beta-D-ribosyl)imidazole-4-carboxamide + L-glutamine = D-erythro-1-(imidazol-4-yl)glycerol 3-phosphate + 5-amino-1-(5-phospho-beta-D-ribosyl)imidazole-4-carboxamide + L-glutamate + H(+). It carries out the reaction L-glutamine + H2O = L-glutamate + NH4(+). It participates in amino-acid biosynthesis; L-histidine biosynthesis; L-histidine from 5-phospho-alpha-D-ribose 1-diphosphate: step 5/9. IGPS catalyzes the conversion of PRFAR and glutamine to IGP, AICAR and glutamate. The HisH subunit catalyzes the hydrolysis of glutamine to glutamate and ammonia as part of the synthesis of IGP and AICAR. The resulting ammonia molecule is channeled to the active site of HisF. This Bacteroides fragilis (strain YCH46) protein is Imidazole glycerol phosphate synthase subunit HisH.